Here is a 96-residue protein sequence, read N- to C-terminus: uncharacterized protein (96 aa).

3 helical membrane passes run 2-22, 38-58, and 68-88; these read FIFN…ICYF, AGLK…TVML, and LTLA…QLIV.

It localises to the membrane. This is an uncharacterized protein from Schizosaccharomyces pombe (strain 972 / ATCC 24843) (Fission yeast).